The primary structure comprises 289 residues: MLKNLFRKTKYITVSQKNIENYKRENTPTIPDGMWVKCNKCGEILYQNDLEKNYMVCNLCGNHFRIGVKERIKYLFDKDTFKEWDYKIKTENPLDFKGYDEKIEHIKEKTNLSEAVTTGKGKIAGMEAVVCIMDSKFMMGSMGCVVGEKITRAIERAIKLRLPVIIFTASGGARMQEGILSLMQMAKVSSALAKLDEEGLLYICVLTDPTTGGVTASFAMLGDIILAEPDALIGFAGKRVIEQTINEKLPEDFQKSEFLLEHGFIDKIVPRSDLRKVLAKLINMHQNSF.

Residues 34–289 (MWVKCNKCGE…KLINMHQNSF (256 aa)) enclose the CoA carboxyltransferase N-terminal domain. Zn(2+) contacts are provided by C38, C41, C57, and C60. The C4-type zinc-finger motif lies at 38 to 60 (CNKCGEILYQNDLEKNYMVCNLC).

Belongs to the AccD/PCCB family. As to quaternary structure, acetyl-CoA carboxylase is a heterohexamer composed of biotin carboxyl carrier protein (AccB), biotin carboxylase (AccC) and two subunits each of ACCase subunit alpha (AccA) and ACCase subunit beta (AccD). The cofactor is Zn(2+).

It is found in the cytoplasm. It catalyses the reaction N(6)-carboxybiotinyl-L-lysyl-[protein] + acetyl-CoA = N(6)-biotinyl-L-lysyl-[protein] + malonyl-CoA. The protein operates within lipid metabolism; malonyl-CoA biosynthesis; malonyl-CoA from acetyl-CoA: step 1/1. Its function is as follows. Component of the acetyl coenzyme A carboxylase (ACC) complex. Biotin carboxylase (BC) catalyzes the carboxylation of biotin on its carrier protein (BCCP) and then the CO(2) group is transferred by the transcarboxylase to acetyl-CoA to form malonyl-CoA. The protein is Acetyl-coenzyme A carboxylase carboxyl transferase subunit beta of Clostridium botulinum (strain Okra / Type B1).